The following is a 487-amino-acid chain: Glutamyl-tRNA(Gln) amidotransferase subunit A (487 aa).

K78 serves as the catalytic Charge relay system. Polar residues predominate over residues 135-144; the sequence is SAYQTTTNPW. A disordered region spans residues 135 to 155; sequence SAYQTTTNPWDASRVPGGSSG. The active-site Charge relay system is the S153. Residue S177 is the Acyl-ester intermediate of the active site.

The protein belongs to the amidase family. GatA subfamily. Heterotrimer of A, B and C subunits.

The catalysed reaction is L-glutamyl-tRNA(Gln) + L-glutamine + ATP + H2O = L-glutaminyl-tRNA(Gln) + L-glutamate + ADP + phosphate + H(+). Allows the formation of correctly charged Gln-tRNA(Gln) through the transamidation of misacylated Glu-tRNA(Gln) in organisms which lack glutaminyl-tRNA synthetase. The reaction takes place in the presence of glutamine and ATP through an activated gamma-phospho-Glu-tRNA(Gln). This Maridesulfovibrio salexigens (strain ATCC 14822 / DSM 2638 / NCIMB 8403 / VKM B-1763) (Desulfovibrio salexigens) protein is Glutamyl-tRNA(Gln) amidotransferase subunit A.